The following is a 184-amino-acid chain: Ethylene-responsive transcription factor ERF024 (184 aa).

The segment at 1–21 (MQGTSKDNGGRHPLYRGVRQR) is disordered. A DNA-binding region (AP2/ERF) is located at residues 14–72 (LYRGVRQRKNSNKWVSEIREPRKPNRIWLGTFSTPEMAAIAYDVAALALKGSQAELNFP).

This sequence belongs to the AP2/ERF transcription factor family. ERF subfamily.

It localises to the nucleus. In terms of biological role, probably acts as a transcriptional activator. Binds to the GCC-box pathogenesis-related promoter element. May be involved in the regulation of gene expression by stress factors and by components of stress signal transduction pathways. In Arabidopsis thaliana (Mouse-ear cress), this protein is Ethylene-responsive transcription factor ERF024 (ERF024).